The primary structure comprises 2114 residues: Protein CELLULOSE SYNTHASE INTERACTIVE 2 (2114 aa).

ARM repeat units lie at residues 2 to 42 (TSEM…LLGL), 46 to 87 (KKEC…VLCK), 89 to 128 (KNVR…EVSL), 135 to 177 (NVGT…NLCG), 180 to 219 (DGFW…RLIR), 222 to 262 (TSSI…AITS), 265 to 305 (EEAI…SYGT), 354 to 394 (GDTR…SLFG), 396 to 435 (VDLS…NLCK), 479 to 519 (EESR…NLCC), 522 to 561 (EEIR…KLIK), 563 to 595 (ADPS…HVLA), 601 to 640 (EFVT…DLFS), 643 to 682 (KDLC…SLSN), 708 to 750 (AKTN…RVLR), 774 to 816 (SDVF…LLAK), 825 to 865 (HNPF…RFCK), 870 to 910 (LLGR…CAAK), 914 to 953 (TLWA…IQRP), 994 to 1033 (PSNR…KWIA), 1044 to 1083 (PKVV…ALVR), 1087 to 1128 (DKTI…LVQN), 1141 to 1182 (ERVR…RIAD), 1185 to 1225 (DLSK…SLFR), 1227 to 1264 (PEIT…LCEL), 1265 to 1304 (FSSE…ALVK), 1312 to 1353 (RPDI…FLFT), 1355 to 1394 (EGLR…RLLD), 1396 to 1435 (KRFV…KMAK), 1454 to 1494 (ISQL…MVQP), 1496 to 1525 (LLIL…KPMV), 1526 to 1564 (LESL…SLLE), 1566 to 1605 (QRFQ…RSSV), 1606 to 1648 (TWPK…NILR), 1650 to 1689 (NPEH…ENQD), 1690 to 1730 (SSSV…RNPK), 1732 to 1771 (RETK…DISQ), 1772 to 1813 (HEGL…NFAM), 1816 to 1855 (RTSR…SLFS), 1857 to 1898 (HTLQ…TILT), 1901 to 1940 (PKLR…TLRQ), and 1949 to 1993 (TARS…CLPG). One can recognise a C2 domain in the interval 1974-2087 (SPAPSSFHER…LSEGSYSGIF (114 aa)).

In terms of assembly, associates with cellulase synthase (CESA) complexes. Binds to cortical microtubules.

It localises to the cell membrane. The protein localises to the cytoplasm. Its subcellular location is the cytoskeleton. In terms of biological role, regulator of the microtubular cytoskeleton. Microtubule-associated protein involved in the association of cellulase synthase (CESA) complexes (CSCs) and cortical microtubules. Promotes dynamics of CSCs in the plasma membrane. Regulates primary cell wall biosynthesis and cellulose microfibrils organization. The sequence is that of Protein CELLULOSE SYNTHASE INTERACTIVE 2 from Arabidopsis thaliana (Mouse-ear cress).